A 171-amino-acid polypeptide reads, in one-letter code: Nicotinamide-nucleotide adenylyltransferase (171 aa).

This sequence belongs to the archaeal NMN adenylyltransferase family.

Its subcellular location is the cytoplasm. The catalysed reaction is beta-nicotinamide D-ribonucleotide + ATP + H(+) = diphosphate + NAD(+). It participates in cofactor biosynthesis; NAD(+) biosynthesis; NAD(+) from nicotinamide D-ribonucleotide: step 1/1. The sequence is that of Nicotinamide-nucleotide adenylyltransferase from Methanococcus maripaludis (strain C5 / ATCC BAA-1333).